The chain runs to 321 residues: Type 3 secretion system translocon protein SctB (321 aa).

Residues 99-119 form a helical membrane-spanning segment; that stretch reads AALIGGAISSVLGILGSFAAI.

It belongs to the SctB/EspB family. The core secretion machinery of the T3SS is composed of approximately 20 different proteins, including cytoplasmic components, a base, an export apparatus and a needle. This subunit is involved in the formation of a pore, called the translocon, in host membrane.

The protein localises to the secreted. It localises to the cell surface. The protein resides in the host membrane. Functionally, component of the type III secretion system (T3SS), also called injectisome, which is used to inject bacterial effector proteins into eukaryotic host cells. EspD and EspB are inserted into the host membrane where they form a pore and allow the translocation of effector proteins into the cytosol of target cells. Necessary for intimate attachment to epithelial cells. This is Type 3 secretion system translocon protein SctB from Escherichia coli O127:H6 (strain E2348/69 / EPEC).